The following is a 354-amino-acid chain: Biotin synthase (354 aa).

Residues 64–282 (GDVELATLLS…IAVARITMPR (219 aa)) enclose the Radical SAM core domain. Residues C79, C83, and C86 each coordinate [4Fe-4S] cluster. Positions 123, 154, 214, and 286 each coordinate [2Fe-2S] cluster.

The protein belongs to the radical SAM superfamily. Biotin synthase family. As to quaternary structure, homodimer. It depends on [4Fe-4S] cluster as a cofactor. Requires [2Fe-2S] cluster as cofactor.

It carries out the reaction (4R,5S)-dethiobiotin + (sulfur carrier)-SH + 2 reduced [2Fe-2S]-[ferredoxin] + 2 S-adenosyl-L-methionine = (sulfur carrier)-H + biotin + 2 5'-deoxyadenosine + 2 L-methionine + 2 oxidized [2Fe-2S]-[ferredoxin]. The protein operates within cofactor biosynthesis; biotin biosynthesis; biotin from 7,8-diaminononanoate: step 2/2. Catalyzes the conversion of dethiobiotin (DTB) to biotin by the insertion of a sulfur atom into dethiobiotin via a radical-based mechanism. This Paracidovorax citrulli (strain AAC00-1) (Acidovorax citrulli) protein is Biotin synthase.